A 193-amino-acid polypeptide reads, in one-letter code: CASP-like protein 1D1 (193 aa).

Residues 1–24 (MGYETKSTLDTERSTAPGTGTTTK) form a disordered region. Residues 1–30 (MGYETKSTLDTERSTAPGTGTTTKSCSMTQ) are Cytoplasmic-facing. The segment covering 14–24 (STAPGTGTTTK) has biased composition (polar residues). The chain crosses the membrane as a helical span at residues 31–51 (VVLRFVLFAATLTSIVVMVTS). Residues 52 to 76 (KQTKNIFLPGTPIRIPAAEFTNSPA) lie on the Extracellular side of the membrane. A helical membrane pass occupies residues 77-97 (LIYFVVALSVACFYSIVSTFV). The Cytoplasmic portion of the chain corresponds to 98–108 (TVSAFKKHSCS). Residues 109–129 (AVLLLNLAIMDAVMVGIVASA) form a helical membrane-spanning segment. Residues 130-162 (TGAGGGVAYLGLKGNKEVRWGKICHIYDKFCRH) lie on the Extracellular side of the membrane. A helical membrane pass occupies residues 163-183 (VGGAIAVSLFASVVLLLLSII). Topologically, residues 184-193 (SVLSLYKKIR) are cytoplasmic.

It belongs to the Casparian strip membrane proteins (CASP) family. In terms of assembly, homodimer and heterodimers.

Its subcellular location is the cell membrane. This Arabidopsis thaliana (Mouse-ear cress) protein is CASP-like protein 1D1.